Reading from the N-terminus, the 208-residue chain is Urease accessory protein UreG 1 (208 aa).

14–21 serves as a coordination point for GTP; the sequence is GPVGSGKT.

The protein belongs to the SIMIBI class G3E GTPase family. UreG subfamily. As to quaternary structure, homodimer. UreD, UreF and UreG form a complex that acts as a GTP-hydrolysis-dependent molecular chaperone, activating the urease apoprotein by helping to assemble the nickel containing metallocenter of UreC. The UreE protein probably delivers the nickel.

It localises to the cytoplasm. Its function is as follows. Facilitates the functional incorporation of the urease nickel metallocenter. This process requires GTP hydrolysis, probably effectuated by UreG. In Brucella ovis (strain ATCC 25840 / 63/290 / NCTC 10512), this protein is Urease accessory protein UreG 1.